Reading from the N-terminus, the 816-residue chain is Phosphatidylinositol 4-kinase beta (816 aa).

Disordered regions lie at residues 1 to 30 (MGDT…GSLL), 101 to 120 (EDEM…RRRR), and 248 to 318 (AHRK…SFSS). An N-acetylglycine modification is found at Gly2. The tract at residues 2-68 (GDTVVEPAPL…VKLLHGGMAV (67 aa)) is interaction with ACBD3. The 191-residue stretch at 52–242 (CQDVLEKVKL…GTKLRKLILS (191 aa)) folds into the PIK helical domain. Ser258 is modified (phosphoserine). At Thr263 the chain carries Phosphothreonine. Residues Ser266, Ser275, Ser277, Ser284, and Ser294 each carry the phosphoserine modification. 2 stretches are compositionally biased toward polar residues: residues 278–297 (DATA…SNPK) and 306–318 (SSST…SFSS). Ser428 is modified (phosphoserine). Thr438 carries the post-translational modification Phosphothreonine. A Phosphoserine modification is found at Ser511. A phosphothreonine mark is found at Thr517 and Thr519. The 267-residue stretch at 535-801 (EPWQEKVRRI…MVDGSMRSIT (267 aa)) folds into the PI3K/PI4K catalytic domain. Residues 541-547 (VRRIREG) are G-loop. A catalytic loop region spans residues 668 to 676 (QVKDRHNGN). The tract at residues 687 to 711 (HIDFGFILSSSPRNLGFETSAFKLT) is activation loop.

Belongs to the PI3/PI4-kinase family. Type III PI4K subfamily. In terms of assembly, interacts with ARF1 and ARF3 in the Golgi complex, but not with ARF4, ARF5 or ARF6. Interacts with NCS1/FREQ in a calcium-independent manner. Interacts with CALN1/CABP8 and CALN2/CABP7; in a calcium-dependent manner; this interaction competes with NCS1/FREQ binding. Interacts with ACBD3. Interacts with ARMH3, YWHAB, YWHAE, YWHAG, YWHAH, YWHAQ, YWHAZ and SFN. Interacts with GGA2 (via VHS domain); the interaction is important for PI4KB location at the Golgi apparatus membrane. Interacts with ATG9A. Requires Mg(2+) as cofactor. Mn(2+) serves as cofactor.

Its subcellular location is the endomembrane system. It localises to the mitochondrion outer membrane. The protein resides in the rough endoplasmic reticulum membrane. It is found in the golgi apparatus. The protein localises to the golgi apparatus membrane. The catalysed reaction is a 1,2-diacyl-sn-glycero-3-phospho-(1D-myo-inositol) + ATP = a 1,2-diacyl-sn-glycero-3-phospho-(1D-myo-inositol 4-phosphate) + ADP + H(+). With respect to regulation, inhibited by wortmannin. Increased kinase activity upon interaction with NCS1/FREQ. Functionally, phosphorylates phosphatidylinositol (PI) in the first committed step in the production of the second messenger inositol-1,4,5,-trisphosphate (PIP). May regulate Golgi disintegration/reorganization during mitosis, possibly via its phosphorylation. Involved in Golgi-to-plasma membrane trafficking. The polypeptide is Phosphatidylinositol 4-kinase beta (PI4KB) (Plecturocebus moloch (Dusky titi monkey)).